The sequence spans 323 residues: Fatty acid desaturase 4, chloroplastic (323 aa).

Residues 1 to 77 constitute a chloroplast transit peptide; it reads MAVSLPTKYP…PRPNREKLVV (77 aa). 2 consecutive transmembrane segments (helical) span residues 101-121 and 131-151; these read WVAA…IGGF and LAGY…HWAI. The short motif at 170–173 is the Histidine box-1 element; the sequence is QGHH. A helical membrane pass occupies residues 204-224; that stretch reads LAFNDPVFHGFVCTFAFCILF. Positions 229 to 233 match the Histidine box-2 motif; it reads HAWAH. Residues 258–262 carry the Histidine box-3 motif; that stretch reads HAEHH.

It belongs to the fatty acid desaturase CarF family. Fe(2+) serves as cofactor.

The protein resides in the plastid. The protein localises to the chloroplast membrane. It catalyses the reaction a 1-acyl-2-hexadecanoyl-glycerolipid + 2 reduced [2Fe-2S]-[ferredoxin] + O2 + 2 H(+) = a 1-acyl-2-[(3E)-hexadec-3-enoyl]-glycerolipid + 2 oxidized [2Fe-2S]-[ferredoxin] + 2 H2O. It functions in the pathway lipid metabolism; fatty acid metabolism. Its function is as follows. Fatty acid desaturase involved in the production of chloroplast-specific phosphatidylglycerol molecular species containing 16:1(3E). Catalyzes the formation of a trans double bond introduced close to the carboxyl group of palmitic acid, which is specifically esterified to the sn-2 glyceryl carbon of phosphatidylglycerol. This Arabidopsis thaliana (Mouse-ear cress) protein is Fatty acid desaturase 4, chloroplastic.